Consider the following 956-residue polypeptide: uncharacterized protein (956 aa).

The Fibronectin type-III domain occupies 40 to 141 (PATKVSIDKI…IYCMTKAREA (102 aa)). Disordered regions lie at residues 152 to 173 (RNTI…PAPL) and 488 to 600 (NNGD…SYSH). Composition is skewed to polar residues over residues 153–165 (NTIT…QPRN) and 488–523 (NNGD…SRTG). The residue at position 154 (Thr-154) is a Phosphothreonine. Phosphoserine is present on residues Ser-501 and Ser-520. Low complexity predominate over residues 524–543 (SIDLISNNNKSINNSNADSA). Residues 552–563 (VSYSPSNEPIQP) show a composition bias toward polar residues. Residues 564 to 574 (SSSLLSQLTQD) show a composition bias toward low complexity. Positions 578-599 (RSMLSNHISSNNENKQQPSSYS) are enriched in polar residues. Ser-802, Ser-842, and Ser-895 each carry phosphoserine. The disordered stretch occupies residues 875–956 (VGPKVPAKEP…NLFNPHSHDS (82 aa)). Positions 895 to 904 (SNSSISSAWS) are enriched in low complexity.

This is an uncharacterized protein from Saccharomyces cerevisiae (strain ATCC 204508 / S288c) (Baker's yeast).